A 214-amino-acid polypeptide reads, in one-letter code: Phosphatidylcholine transfer protein (214 aa).

Met-1 carries the post-translational modification N-acetylmethionine. The 212-residue stretch at 1 to 212 (MAGAACCFSD…MVKACQNYHK (212 aa)) folds into the START domain. The a 1,2-diacyl-sn-glycero-3-phosphocholine site is built by Tyr-72 and Arg-78. The residue at position 139 (Ser-139) is a Phosphoserine. A 1,2-diacyl-sn-glycero-3-phosphocholine is bound at residue Gln-157.

Interacts with ACOT13/THEM2. As to expression, abundant in liver of pups but levels in liver decrease 10-fold about 2 weeks after birth. In adult, highly expressed in epididymis, testis, kidney and bone-marrow derived mast cells.

The protein resides in the cytoplasm. Functionally, catalyzes the transfer of phosphatidylcholine between membranes. Binds a single lipid molecule. This chain is Phosphatidylcholine transfer protein (Pctp), found in Mus musculus (Mouse).